Reading from the N-terminus, the 74-residue chain is Brevinin-2Ef (74 aa).

The first 22 residues, 1 to 22 (MFTMKKSLLLIFFLGTISLSLC), serve as a signal peptide directing secretion. Positions 23–41 (QEERNADDDDGEMTEEEKR) are excised as a propeptide. An intrachain disulfide couples cysteine 68 to cysteine 74.

Belongs to the frog skin active peptide (FSAP) family. Brevinin subfamily. In terms of tissue distribution, expressed by the skin glands.

The protein resides in the secreted. Shows antibacterial activity against representative Gram-negative and Gram-positive bacterial species, and hemolytic activity. This chain is Brevinin-2Ef, found in Pelophylax lessonae (Pool frog).